We begin with the raw amino-acid sequence, 1235 residues long: Phosphorylase b kinase regulatory subunit alpha, liver isoform (1235 aa).

A disordered region spans residues 636-655 (FSPDSEPDLGGYLEDSSPQE). Phosphoserine is present on residues Ser-695, Ser-729, and Ser-735. The interval 807–837 (LSELYGKAGLNQEWSLIRYISGLLRKKVEVL) is calmodulin-binding. A phosphoserine mark is found at Ser-983, Ser-1015, and Ser-1044. Positions 1033 to 1060 (SIKSVRSSTPSSPTGTSSTDSGGQHLGW) are disordered. A compositionally biased stretch (low complexity) spans 1039 to 1055 (SSTPSSPTGTSSTDSGG). The tract at residues 1059–1099 (GWGEQQGQWLRRRRLDGAINRVPVGFYQKVWKILQKCHGLS) is calmodulin-binding. Residue Cys-1232 is the site of S-farnesyl cysteine attachment.

It belongs to the phosphorylase b kinase regulatory chain family. As to quaternary structure, hexadecamer of 4 heterotetramers, each composed of alpha, beta, gamma, and delta subunits. Alpha (PHKA1 or PHKA2) and beta (PHKB) are regulatory subunits, gamma (PHKG1 or PHKG2) is the catalytic subunit, and delta is calmodulin. Post-translationally, although the final Cys may be farnesylated, the terminal tripeptide is probably not removed, and the C-terminus is not methylated.

It is found in the cell membrane. It functions in the pathway glycan biosynthesis; glycogen metabolism. By phosphorylation of various serine residues and by calcium. Phosphorylase b kinase catalyzes the phosphorylation of serine in certain substrates, including troponin I. The alpha chain may bind calmodulin. This is Phosphorylase b kinase regulatory subunit alpha, liver isoform (Phka2) from Mus musculus (Mouse).